Here is a 249-residue protein sequence, read N- to C-terminus: Beta-crystallin B1 (249 aa).

The interval 1–49 (MSQPAVKASATAAVNPGPDGKGKGAPPPGPAPGSGPAQAPAQPMPAAKG) is disordered. Position 2 is an N-acetylserine (Ser-2). An N-terminal arm region spans residues 2–55 (SQPAVKASATAAVNPGPDGKGKGAPPPGPAPGSGPAQAPAQPMPAAKGDLPPGS). Residues 34–49 (SGPAQAPAQPMPAAKG) are compositionally biased toward low complexity. 2 Beta/gamma crystallin 'Greek key' domains span residues 56-95 (YKLV…IVTS) and 96-140 (GPWV…RPIR). Residues 141-145 (MDAQE) form a connecting peptide region. Beta/gamma crystallin 'Greek key' domains follow at residues 146–187 (HKLC…RVSS) and 188–230 (GTWV…RRLR). Residues 232–249 (RQWHREGCFPVLAAEPPK) form a C-terminal arm region.

It belongs to the beta/gamma-crystallin family. As to quaternary structure, homo/heterodimer, or complexes of higher-order. The structure of beta-crystallin oligomers seems to be stabilized through interactions between the N-terminal arms. Post-translationally, specific cleavages in the N-terminal arm occur during lens maturation and give rise to truncated forms, leading to impaired oligomerization and protein insolubilization.

Crystallins are the dominant structural components of the vertebrate eye lens. In Sus scrofa (Pig), this protein is Beta-crystallin B1 (CRYBB1).